Consider the following 271-residue polypeptide: Probable ribosomal RNA small subunit methyltransferase A (271 aa).

S-adenosyl-L-methionine is bound by residues histidine 19, leucine 21, glycine 46, glutamate 67, aspartate 92, and asparagine 107.

The protein belongs to the class I-like SAM-binding methyltransferase superfamily. rRNA adenine N(6)-methyltransferase family. RsmA subfamily.

Its subcellular location is the cytoplasm. Functionally, specifically dimethylates two adjacent adenosines in the loop of a conserved hairpin near the 3'-end of 16S rRNA in the 30S particle. May play a critical role in biogenesis of 30S subunits. In Methanosarcina mazei (strain ATCC BAA-159 / DSM 3647 / Goe1 / Go1 / JCM 11833 / OCM 88) (Methanosarcina frisia), this protein is Probable ribosomal RNA small subunit methyltransferase A.